The following is a 908-amino-acid chain: Flap endonuclease GEN homolog 1 (908 aa).

Positions 2–96 (GVNDLWQILE…SKRTQTRYGP (95 aa)) are XPG-N domain. 7 residues coordinate Mg(2+): Asp-30, Glu-75, Glu-134, Glu-136, Asp-155, Asp-157, and Asp-208. Residues 122–208 (ECLGMPWVQA…VGLAVLLGCD (87 aa)) are XPG-I domain. The interval 208–383 (DYLPKGVPGV…LLVLLTRYDM (176 aa)) is 5'-3' exonuclease domain. Residues 389-463 (GRKTSNQLQP…VYQKQLSETK (75 aa)) form a chromodomain region. Disordered stretches follow at residues 460–482 (SETK…LPEA), 629–650 (YESE…QSNP), 792–834 (RDSS…NKLR), and 853–886 (AEDE…SWEN). Positions 465-476 (RKQKSMKNKPKG) are enriched in basic residues. Residues Ser-794 and Ser-795 each carry the phosphoserine modification. Positions 824-834 (HVRDSTHNKLR) are enriched in basic and acidic residues.

Belongs to the XPG/RAD2 endonuclease family. GEN subfamily. In terms of assembly, largely monomeric, dimerizes on the Holliday junction and the first nick occurs upon dimerization at the junction. Mg(2+) is required as a cofactor. In terms of tissue distribution, expressed in bone marrow and testis and to a lesser extent in thymus, spleen, brain and colon.

It localises to the nucleus. Functionally, endonuclease which resolves Holliday junctions (HJs) by the introduction of symmetrically related cuts across the junction point, to produce nicked duplex products in which the nicks can be readily ligated. Four-way DNA intermediates, also known as Holliday junctions, are formed during homologous recombination and DNA repair, and their resolution is necessary for proper chromosome segregation. Cleaves HJs by a nick and counter-nick mechanism involving dual coordinated incisions that lead to the formation of ligatable nicked duplex products. Cleavage of the first strand is rate limiting, while second strand cleavage is rapid. Largely monomeric, dimerizes on the HJ and the first nick occurs upon dimerization at the junction. Efficiently cleaves both single and double HJs contained within large recombination intermediates. Exhibits a weak sequence preference for incision between two G residues that reside in a T-rich region of DNA. Also has endonuclease activity on 5'-flap and replication fork (RF) DNA substrates. The sequence is that of Flap endonuclease GEN homolog 1 (Gen1) from Mus musculus (Mouse).